Here is a 689-residue protein sequence, read N- to C-terminus: Elongation factor G (689 aa).

Positions 8 to 282 constitute a tr-type G domain; it reads ERTRNIGIMA…AVVDYLPAPT (275 aa). GTP is bound by residues 17–24, 81–85, and 135–138; these read AHIDAGKT, DTPGH, and NKMD.

This sequence belongs to the TRAFAC class translation factor GTPase superfamily. Classic translation factor GTPase family. EF-G/EF-2 subfamily.

It is found in the cytoplasm. In terms of biological role, catalyzes the GTP-dependent ribosomal translocation step during translation elongation. During this step, the ribosome changes from the pre-translocational (PRE) to the post-translocational (POST) state as the newly formed A-site-bound peptidyl-tRNA and P-site-bound deacylated tRNA move to the P and E sites, respectively. Catalyzes the coordinated movement of the two tRNA molecules, the mRNA and conformational changes in the ribosome. This is Elongation factor G from Desulforudis audaxviator (strain MP104C).